A 452-amino-acid chain; its full sequence is Inner membrane metabolite transport protein YdjE (452 aa).

Residues 1–20 (MEQYDQIGARLDRLPLARFH) are Cytoplasmic-facing. The helical transmembrane segment at 21-43 (YRIFGIISFSLLLTGFLSYSGNV) threads the bilayer. The Periplasmic segment spans residues 44 to 57 (VLAKLVSNGWSNNF). Residues 58 to 80 (LNAAFTSALMFGYFIGSLTGGFI) traverse the membrane as a helical segment. Residues 81-91 (GDYFGRRRAFR) lie on the Cytoplasmic side of the membrane. The helical transmembrane segment at 92–114 (INLLIVGIAATGAAFVPDMYWLI) threads the bilayer. Residues 115 to 117 (FFR) lie on the Periplasmic side of the membrane. The helical transmembrane segment at 118 to 140 (FLMGTGMGALIMVGYASFTEFIP) threads the bilayer. The Cytoplasmic portion of the chain corresponds to 141–152 (ATVRGKWSARLS). The helical transmembrane segment at 153–175 (FVGNWSPMLSAAIGVVVIAFFSW) threads the bilayer. Residues 176–178 (RIM) lie on the Periplasmic side of the membrane. A helical membrane pass occupies residues 179-198 (FLLGGIGILLAWFLSGKYFI). Topologically, residues 199–265 (ESPRWLAGKG…KGEMLRRTLV (67 aa)) are cytoplasmic. A helical transmembrane segment spans residues 266–288 (AITVLIAMNISLYTITVWIPTIF). At 289–297 (VNSGIDVDK) the chain is on the periplasmic side. Residues 298–320 (SILMTAVIMIGAPVGIFIAALII) form a helical membrane-spanning segment. Over 321-326 (DHFPRR) the chain is Cytoplasmic. The chain crosses the membrane as a helical span at residues 327-344 (LFGSTLLIIIAVLGYIYS). Residues 345–353 (IQTTEWAIL) lie on the Periplasmic side of the membrane. A helical transmembrane segment spans residues 354–376 (IYGLVMIFFLYMYVCFASAVYIP). Residues 377-388 (ELWPTHLRLRGS) lie on the Cytoplasmic side of the membrane. Residues 389-411 (GFVNAVGRIVAVFTPYGVAALLT) traverse the membrane as a helical segment. At 412 to 415 (HYGS) the chain is on the periplasmic side. The helical transmembrane segment at 416–438 (ITVFMVLGVMLLLCALVLSIFGI) threads the bilayer. The Cytoplasmic portion of the chain corresponds to 439-452 (ETRKVSLEEISEVN).

Belongs to the major facilitator superfamily. Sugar transporter (TC 2.A.1.1) family.

It localises to the cell inner membrane. The polypeptide is Inner membrane metabolite transport protein YdjE (ydjE) (Escherichia coli (strain K12)).